A 391-amino-acid polypeptide reads, in one-letter code: NAD(P)H-quinone oxidoreductase subunit H, chloroplastic (391 aa).

This sequence belongs to the complex I 49 kDa subunit family. NDH is composed of at least 16 different subunits, 5 of which are encoded in the nucleus.

The protein localises to the plastid. It is found in the chloroplast thylakoid membrane. It carries out the reaction a plastoquinone + NADH + (n+1) H(+)(in) = a plastoquinol + NAD(+) + n H(+)(out). The catalysed reaction is a plastoquinone + NADPH + (n+1) H(+)(in) = a plastoquinol + NADP(+) + n H(+)(out). Functionally, NDH shuttles electrons from NAD(P)H:plastoquinone, via FMN and iron-sulfur (Fe-S) centers, to quinones in the photosynthetic chain and possibly in a chloroplast respiratory chain. The immediate electron acceptor for the enzyme in this species is believed to be plastoquinone. Couples the redox reaction to proton translocation, and thus conserves the redox energy in a proton gradient. In Chaetosphaeridium globosum (Charophycean green alga), this protein is NAD(P)H-quinone oxidoreductase subunit H, chloroplastic.